The chain runs to 364 residues: Aminomethyltransferase (364 aa).

The protein belongs to the GcvT family. As to quaternary structure, the glycine cleavage system is composed of four proteins: P, T, L and H.

It catalyses the reaction N(6)-[(R)-S(8)-aminomethyldihydrolipoyl]-L-lysyl-[protein] + (6S)-5,6,7,8-tetrahydrofolate = N(6)-[(R)-dihydrolipoyl]-L-lysyl-[protein] + (6R)-5,10-methylene-5,6,7,8-tetrahydrofolate + NH4(+). In terms of biological role, the glycine cleavage system catalyzes the degradation of glycine. The sequence is that of Aminomethyltransferase from Shewanella baltica (strain OS195).